Here is a 359-residue protein sequence, read N- to C-terminus: Trans-enoyl reductase RAP1 (359 aa).

Residue 49–52 (CDFK) participates in NADP(+) binding. 137–144 (TCIATACM) contacts substrate. NADP(+)-binding positions include 195-198 (SPKN), tyrosine 213, and 260-261 (LE). 281–285 (GQMIL) provides a ligand contact to substrate. An NADP(+)-binding site is contributed by 350-351 (VA).

This sequence belongs to the zinc-containing alcohol dehydrogenase family. Monomer.

Its pathway is secondary metabolite biosynthesis. Its function is as follows. Trans-enoyl reductase; part of the gene cluster that mediates the biosynthesis of a tyrosine-derived cytochalasan acting as a fungal signal recognized by resistant rice plants and leads to avirulence in Pi33 resistant rice cultivars. The first step in the pathway is catalyzed by the hybrid PKS-NRPS ACE1, assisted by the enoyl reductase RAP1, that are responsible for fusion of the tyrosine precursor and the polyketide backbone. The polyketide synthase module (PKS) of ACE1 is responsible for the synthesis of the polyketide backbone and the downstream nonribosomal peptide synthetase (NRPS) amidates the carboxyl end of the polyketide with the tyrosine precursor. Because ACE1 lacks a designated enoylreductase (ER) domain, the required activity is provided the enoyl reductase RAP1. Reduction by the hydrolyase ORFZ, followed by dehydration and intra-molecular Diels-Alder cyclization by the Diels-Alderase ORF3 then yield the required isoindolone-fused macrocycle. A number of oxidative steps catalyzed by the tailoring enzymes identified within the cluster, including cytochrome P450 monooxygenases CYP1 to CYP4, the FAD-linked oxidoreductase OXR2 and the short-chain dehydrogenase/reductase OXR1, are further required to afford the final cytochalasans that confer avirulence and which have still to be identified. The monooxygenase CYP1 has been shown to be a site-selective C-18 hydroxylase whereas the function of CYP3 is the site-selective epoxidation of the C-6/C-7 olefin that is present in some intermediate compounds. Finally, SYN2 and RAP2 are not required for avirulence in Pi33 resistant rice cultivars. The protein is Trans-enoyl reductase RAP1 of Pyricularia oryzae (strain 70-15 / ATCC MYA-4617 / FGSC 8958) (Rice blast fungus).